Here is a 216-residue protein sequence, read N- to C-terminus: Uracil phosphoribosyltransferase (216 aa).

5-phospho-alpha-D-ribose 1-diphosphate-binding positions include Arg-85, Arg-110, and 135 to 143 (DPMVATGYS). Uracil contacts are provided by residues Ile-200 and 205-207 (GDA). Asp-206 lines the 5-phospho-alpha-D-ribose 1-diphosphate pocket.

Belongs to the UPRTase family. Mg(2+) is required as a cofactor.

The catalysed reaction is UMP + diphosphate = 5-phospho-alpha-D-ribose 1-diphosphate + uracil. It participates in pyrimidine metabolism; UMP biosynthesis via salvage pathway; UMP from uracil: step 1/1. Allosterically activated by GTP. In terms of biological role, catalyzes the conversion of uracil and 5-phospho-alpha-D-ribose 1-diphosphate (PRPP) to UMP and diphosphate. The polypeptide is Uracil phosphoribosyltransferase (Burkholderia ambifaria (strain ATCC BAA-244 / DSM 16087 / CCUG 44356 / LMG 19182 / AMMD) (Burkholderia cepacia (strain AMMD))).